The sequence spans 276 residues: MLKARVIPCLDVKDGRVVKGVNFVDLRDAGDPVQCAIAYDAAGADELCFLDITASHEDRGILLDVVERTAAACFMPLTVGGGVRTEDDIRKLLLAGADKVSIMSAAVTDRDFVRRAAEKFGSQCVVVAIDAKEVRPGAWEIFTHGGRKPTGIDAITYARDVAERGAGEILLTSMDRDGTKAGFDLALTRAVSSAVSIPVIASGGVGTLDHLVEGIAQGGAQAVLAASIFHFGTFTIAEAKHYMAQHGLPMRLDTGAAMPPGPFPAPSPPVSPAATG.

Catalysis depends on residues Asp-11 and Asp-130.

Belongs to the HisA/HisF family. Heterodimer of HisH and HisF.

The protein resides in the cytoplasm. The enzyme catalyses 5-[(5-phospho-1-deoxy-D-ribulos-1-ylimino)methylamino]-1-(5-phospho-beta-D-ribosyl)imidazole-4-carboxamide + L-glutamine = D-erythro-1-(imidazol-4-yl)glycerol 3-phosphate + 5-amino-1-(5-phospho-beta-D-ribosyl)imidazole-4-carboxamide + L-glutamate + H(+). It participates in amino-acid biosynthesis; L-histidine biosynthesis; L-histidine from 5-phospho-alpha-D-ribose 1-diphosphate: step 5/9. Its function is as follows. IGPS catalyzes the conversion of PRFAR and glutamine to IGP, AICAR and glutamate. The HisF subunit catalyzes the cyclization activity that produces IGP and AICAR from PRFAR using the ammonia provided by the HisH subunit. The protein is Imidazole glycerol phosphate synthase subunit HisF of Beijerinckia indica subsp. indica (strain ATCC 9039 / DSM 1715 / NCIMB 8712).